Reading from the N-terminus, the 353-residue chain is Diacetylchitobiose uptake system permease protein NgcF (353 aa).

The tract at residues 1–24 (MKDTIPTAETASRRPEPAARGGRP) is disordered. 6 helical membrane passes run 36–56 (FFLA…LIPF), 100–120 (LLAA…AVAI), 141–161 (IISF…WAQM), 197–217 (VMFV…IAAI), 254–274 (AYIY…AMVP), and 303–323 (TAMG…VFLV). Positions 95-320 (LRNVALLAAF…AVTLVFAALV (226 aa)) constitute an ABC transmembrane type-1 domain. Positions 329-353 (GGEGESKRKAPGSRARRAAAKGGAR) are disordered. Residues 337-353 (KAPGSRARRAAAKGGAR) show a composition bias toward basic residues.

The protein belongs to the binding-protein-dependent transport system permease family. The complex is composed of two ATP-binding proteins (MsiK), two transmembrane proteins (NgcF and NgcG) and a solute-binding protein (NgcE).

The protein resides in the cell membrane. In terms of biological role, part of the ABC transporter complex NgcEFG-MsiK involved in N,N'-diacetylchitobiose ((GlcNAc)2) uptake. Responsible for the translocation of the substrate across the membrane. The polypeptide is Diacetylchitobiose uptake system permease protein NgcF (Streptomyces coelicolor (strain ATCC BAA-471 / A3(2) / M145)).